Consider the following 134-residue polypeptide: Large ribosomal subunit protein uL22 (134 aa).

It belongs to the universal ribosomal protein uL22 family. In terms of assembly, part of the 50S ribosomal subunit.

Functionally, this protein binds specifically to 23S rRNA; its binding is stimulated by other ribosomal proteins, e.g. L4, L17, and L20. It is important during the early stages of 50S assembly. It makes multiple contacts with different domains of the 23S rRNA in the assembled 50S subunit and ribosome. In terms of biological role, the globular domain of the protein is located near the polypeptide exit tunnel on the outside of the subunit, while an extended beta-hairpin is found that lines the wall of the exit tunnel in the center of the 70S ribosome. The polypeptide is Large ribosomal subunit protein uL22 (Porphyromonas gingivalis (strain ATCC 33277 / DSM 20709 / CIP 103683 / JCM 12257 / NCTC 11834 / 2561)).